We begin with the raw amino-acid sequence, 216 residues long: Small ribosomal subunit protein uS3 (216 aa).

A KH type-2 domain is found at leucine 38–lysine 108.

This sequence belongs to the universal ribosomal protein uS3 family. In terms of assembly, part of the 30S ribosomal subunit. Forms a tight complex with proteins S10 and S14.

Its function is as follows. Binds the lower part of the 30S subunit head. Binds mRNA in the 70S ribosome, positioning it for translation. The polypeptide is Small ribosomal subunit protein uS3 (Desulfosudis oleivorans (strain DSM 6200 / JCM 39069 / Hxd3) (Desulfococcus oleovorans)).